A 3133-amino-acid chain; its full sequence is Hemocytin (3133 aa).

A TIL 1 domain is found at 40-96; the sequence is CTGGQQYTVCADSCLRKCSDTALAASGQCKPVCVEGCACSPSQLLDDNGVCVPVAKC. N151 carries an N-linked (GlcNAc...) asparagine glycan. The 57-residue stretch at 153–209 folds into the TIL 2 domain; sequence TAQNMEFTTCETSEPLTCKNMHLPPSTQTAECRPGCQCKKGQVLDTASKRCVPATQC. N237 carries N-linked (GlcNAc...) asparagine glycosylation. Residues 247 to 418 enclose the VWFD 1 domain; it reads GVCGAWGDSH…DSWKLKPTCP (172 aa). Cystine bridges form between C249-C380, C271-C417, and C295-C302. A TIL 3 domain is found at 509–576; it reads CDEVCSNYDS…TTECVPRAKC (68 aa). N564 is a glycosylation site (N-linked (GlcNAc...) asparagine). The interval 661 to 680 is disordered; the sequence is PDGQSVESEPLPKPNELQIG. A TIL 4 domain is found at 770–837; that stretch reads CPPGEVYQAC…ERTCVPVKDC (68 aa). The tract at residues 899 to 924 is disordered; that stretch reads STTTTTTTSTTTTTTTPEPTETTTET. 2 disulfide bridges follow: C940–C1095 and C1116–C1254. 2 consecutive F5/8 type C domains span residues 940–1095 and 1116–1254; these read CSPD…IIGC and CTEP…PIGC. N-linked (GlcNAc...) asparagine glycans are attached at residues N1170, N1387, N1622, N1727, and N1847. In terms of domain architecture, VWFD 2 spans 1619-1794; it reads VFCNMTGRTF…KPGVPADACA (176 aa). 2 cysteine pairs are disulfide-bonded: C1621–C1754 and C1641–C1793. Residues 1890-1948 enclose the TIL 5 domain; it reads CPPPLVHYDCYRKRCEETCAPYPNAARACPAQEGQCSPGCYCPDGKLRKGDQCVLPADC. The region spanning 1951 to 2136 is the VWFD 3 domain; that stretch reads CTCTGVGTPA…WQASPEKLTE (186 aa). Intrachain disulfides connect C1953-C2099 and C2001-C2009. N-linked (GlcNAc...) asparagine glycans are attached at residues N1975 and N1985. N2093, N2113, N2161, N2276, and N2451 each carry an N-linked (GlcNAc...) asparagine glycan. The region spanning 2229 to 2285 is the TIL 6 domain; that stretch reads CEEPFVYRACVDCERTCDNYEQLQTSPEKCTNKPVEGCFCPEGKVRVNNTCIEPGKC. Residues 2553–2622 form the VWFC 1 domain; it reads VACRHQDNVY…DSGQCCGKCE (70 aa). Residues N2647, N2654, N2663, N2794, N2810, N2865, N2929, N2964, and N3028 are each glycosylated (N-linked (GlcNAc...) asparagine). The 66-residue stretch at 2842 to 2907 folds into the VWFC 2 domain; that stretch reads VACRDGDKIY…AADHCCGRCV (66 aa). 4 disulfide bridges follow: C2971–C3040, C2991–C3054, C3004–C3070, and C3020–C3072. In terms of domain architecture, CTCK spans 2971–3076; the sequence is CNEKPQALSK…PARCHCAACG (106 aa).

Post-translationally, may be converted into the 260 kDa mature hemocytin by proteolysis.

In terms of biological role, adhesive protein and relates to hemostasis or encapsulation of foreign substances for self-defense. The sequence is that of Hemocytin from Bombyx mori (Silk moth).